A 328-amino-acid chain; its full sequence is Cytochrome c biogenesis protein CcsA (328 aa).

The next 8 helical transmembrane spans lie at 15-35 (FLVL…PSIP), 36-56 (LLPG…AALL), 68-88 (ISNL…VHLI), 97-117 (LVGV…TLSL), 142-162 (VMML…AFLI), 236-256 (VIGL…VWAN), 263-283 (WSWD…AAYL), and 297-317 (AILA…VNLL).

Belongs to the CcmF/CycK/Ccl1/NrfE/CcsA family. As to quaternary structure, may interact with ccs1.

The protein localises to the cellular thylakoid membrane. Functionally, required during biogenesis of c-type cytochromes (cytochrome c6 and cytochrome f) at the step of heme attachment. The chain is Cytochrome c biogenesis protein CcsA from Microcystis aeruginosa (strain NIES-843 / IAM M-2473).